Here is a 370-residue protein sequence, read N- to C-terminus: UDP-N-acetylglucosamine--N-acetylmuramyl-(pentapeptide) pyrophosphoryl-undecaprenol N-acetylglucosamine transferase (370 aa).

UDP-N-acetyl-alpha-D-glucosamine contacts are provided by residues 10–12 (TGG), asparagine 124, serine 196, isoleucine 253, and glutamine 298.

It belongs to the glycosyltransferase 28 family. MurG subfamily.

The protein resides in the cell membrane. It catalyses the reaction Mur2Ac(oyl-L-Ala-gamma-D-Glu-L-Lys-D-Ala-D-Ala)-di-trans,octa-cis-undecaprenyl diphosphate + UDP-N-acetyl-alpha-D-glucosamine = beta-D-GlcNAc-(1-&gt;4)-Mur2Ac(oyl-L-Ala-gamma-D-Glu-L-Lys-D-Ala-D-Ala)-di-trans,octa-cis-undecaprenyl diphosphate + UDP + H(+). Its pathway is cell wall biogenesis; peptidoglycan biosynthesis. Its function is as follows. Cell wall formation. Catalyzes the transfer of a GlcNAc subunit on undecaprenyl-pyrophosphoryl-MurNAc-pentapeptide (lipid intermediate I) to form undecaprenyl-pyrophosphoryl-MurNAc-(pentapeptide)GlcNAc (lipid intermediate II). The chain is UDP-N-acetylglucosamine--N-acetylmuramyl-(pentapeptide) pyrophosphoryl-undecaprenol N-acetylglucosamine transferase from Limosilactobacillus reuteri subsp. reuteri (strain JCM 1112) (Lactobacillus reuteri).